A 128-amino-acid polypeptide reads, in one-letter code: Large ribosomal subunit protein uL18 (128 aa).

The protein belongs to the universal ribosomal protein uL18 family. Part of the 50S ribosomal subunit; part of the 5S rRNA/L5/L18/L25 subcomplex. Contacts the 5S and 23S rRNAs.

In terms of biological role, this is one of the proteins that bind and probably mediate the attachment of the 5S RNA into the large ribosomal subunit, where it forms part of the central protuberance. In Acidothermus cellulolyticus (strain ATCC 43068 / DSM 8971 / 11B), this protein is Large ribosomal subunit protein uL18.